The primary structure comprises 557 residues: Potassium-transporting ATPase potassium-binding subunit (557 aa).

Helical transmembrane passes span 1 to 21, 62 to 82, 132 to 152, 176 to 196, 253 to 273, 279 to 299, 371 to 391, 415 to 435, 482 to 502, and 528 to 548; these read MEILQIAIILIVFVLLCIPIG, QYIFALLMCNAVPAIIGYIIL, IVITFFMFFAAATGIAVALAF, ILLPLSIIVAIFYIGQGVPQT, VQIITLLLLAGSMVVCFGHMI, AVAIFAAMMVLLLAGAAICFS, IFGGVGVGFMNMIMYAILTVF, LVAFAIIVHPFLILMSSALAL, VSAGVVMFLGRYLSIIILLAV, and VTLIVIIVIIGALTFLPAVAL.

It belongs to the KdpA family. As to quaternary structure, the system is composed of three essential subunits: KdpA, KdpB and KdpC.

The protein localises to the cell membrane. In terms of biological role, part of the high-affinity ATP-driven potassium transport (or Kdp) system, which catalyzes the hydrolysis of ATP coupled with the electrogenic transport of potassium into the cytoplasm. This subunit binds the extracellular potassium ions and delivers the ions to the membrane domain of KdpB through an intramembrane tunnel. In Clostridium acetobutylicum (strain ATCC 824 / DSM 792 / JCM 1419 / IAM 19013 / LMG 5710 / NBRC 13948 / NRRL B-527 / VKM B-1787 / 2291 / W), this protein is Potassium-transporting ATPase potassium-binding subunit.